The primary structure comprises 361 residues: MSFNTFGHMFRVTTFGESHGVAIGCVVDGCPPRIPLEPAEIQVDLDRRRPGQSRFTTQRQEPDQVKILSGVMPDPDTGAQVTTGTPIALLIENTDQRSKDYSEIKDKFRPGHADFTYEAKYGLRDYRGGGRSSARETATRVAAGAIARKILAGVKVRGALVQMGPHKIDRAKWDWDEIARNPFFCPDKDKAAFFEDYLDGIRKSGSSIGAVLEITAEGVPAGLGAPLYGKLDADLAAAMMSINAVKGVEIGAGFAAAELTGEENADEMRSANDGTRFLSNNAGGILGGIATGQPIVVRFAVKPTSSILTPRQTVDRAGHETEILTKGRHDPCVGIRAVPVGEAMMACVLADHLLRHRGQVG.

NADP(+) contacts are provided by Arg-48 and Arg-54. Residues 131–133, 243–244, Gly-287, 302–306, and Arg-328 contribute to the FMN site; these read RSS, NA, and KPTSS.

The protein belongs to the chorismate synthase family. As to quaternary structure, homotetramer. It depends on FMNH2 as a cofactor.

The catalysed reaction is 5-O-(1-carboxyvinyl)-3-phosphoshikimate = chorismate + phosphate. Its pathway is metabolic intermediate biosynthesis; chorismate biosynthesis; chorismate from D-erythrose 4-phosphate and phosphoenolpyruvate: step 7/7. Functionally, catalyzes the anti-1,4-elimination of the C-3 phosphate and the C-6 proR hydrogen from 5-enolpyruvylshikimate-3-phosphate (EPSP) to yield chorismate, which is the branch point compound that serves as the starting substrate for the three terminal pathways of aromatic amino acid biosynthesis. This reaction introduces a second double bond into the aromatic ring system. This Bradyrhizobium sp. (strain BTAi1 / ATCC BAA-1182) protein is Chorismate synthase.